Reading from the N-terminus, the 1383-residue chain is Putative autophagy-related protein 11 (1383 aa).

Coiled coils occupy residues 16 to 49 and 117 to 324; these read DKNNDILISKQKIEDLKKSIENLLNDKNAHYELN and NLFL…QNKE. Basic and acidic residues-rich tracts occupy residues 1151-1224 and 1233-1249; these read EEEK…EDRK and HSSDKEEKYNKKEKTKE. The disordered stretch occupies residues 1151 to 1249; that stretch reads EEEKKKNEEE…KYNKKEKTKE (99 aa).

This sequence belongs to the ATG11 family.

Involved in cytoplasm to vacuole transport (Cvt), pexophagy, mitophagy and nucleophagy. Works as scaffold proteins that recruit ATG proteins to the pre-autophagosome (PAS), the site of vesicle/autophagosome formation. This chain is Putative autophagy-related protein 11, found in Plasmodium falciparum (isolate 3D7).